Reading from the N-terminus, the 437-residue chain is Glutamyl-tRNA reductase (437 aa).

Residues 49-52, S109, 114-116, and Q120 each bind substrate; these read TCNR and ETQ. Residue C50 is the Nucleophile of the active site. NADP(+) is bound at residue 189–194; that stretch reads GAGEMS.

The protein belongs to the glutamyl-tRNA reductase family. As to quaternary structure, homodimer.

It catalyses the reaction (S)-4-amino-5-oxopentanoate + tRNA(Glu) + NADP(+) = L-glutamyl-tRNA(Glu) + NADPH + H(+). It participates in porphyrin-containing compound metabolism; protoporphyrin-IX biosynthesis; 5-aminolevulinate from L-glutamyl-tRNA(Glu): step 1/2. In terms of biological role, catalyzes the NADPH-dependent reduction of glutamyl-tRNA(Glu) to glutamate 1-semialdehyde (GSA). This Listeria welshimeri serovar 6b (strain ATCC 35897 / DSM 20650 / CCUG 15529 / CIP 8149 / NCTC 11857 / SLCC 5334 / V8) protein is Glutamyl-tRNA reductase.